Here is a 340-residue protein sequence, read N- to C-terminus: Eukaryotic translation initiation factor 3 subunit I (340 aa).

WD repeat units follow at residues 8 to 47 (GHER…RLGT), 50 to 89 (GHQG…CVKV), 91 to 135 (DFPT…GEGN), 150 to 189 (CEQS…QLQN), 194 to 233 (EFDY…VMKT), and 291 to 330 (GHFG…FDFM).

It belongs to the eIF-3 subunit I family. As to quaternary structure, component of the eukaryotic translation initiation factor 3 (eIF-3) complex.

The protein resides in the cytoplasm. Functionally, component of the eukaryotic translation initiation factor 3 (eIF-3) complex, which is involved in protein synthesis of a specialized repertoire of mRNAs and, together with other initiation factors, stimulates binding of mRNA and methionyl-tRNAi to the 40S ribosome. The eIF-3 complex specifically targets and initiates translation of a subset of mRNAs involved in cell proliferation. The protein is Eukaryotic translation initiation factor 3 subunit I of Coccidioides immitis (strain RS) (Valley fever fungus).